The primary structure comprises 630 residues: Pro-interleukin-16 (630 aa).

Disordered stretches follow at residues 30–268 and 316–343; these read ENPG…FPLT and PKEG…ASDT. Positions 129-143 are enriched in low complexity; the sequence is IRASSSSSIKQRISS. Ser220 is modified (phosphoserine). Over residues 321 to 343 the composition is skewed to polar residues; the sequence is SPTSSSNEDSAANGSAETSASDT. Residues 404–500 form an interaction with PPP1R12A, PPP1R12B and PPP1R12C region; sequence KQLDSIHVTI…IVTRKLTAES (97 aa). PDZ domains are found at residues 410 to 495 and 532 to 617; these read HVTI…VTRK and TVTL…IRRK.

As to quaternary structure, homotetramer. Pro-interleukin-16 interacts (via PDZ 2 domain) with PPP1R12A, PPP1R12B and PPP1R12C. Pro-interleukin-16 interacts with GRIN2A. Pro-interleukin-16 interacts with GABPB1. Pro-interleukin-16 interacts (via PDZ 3 domain) with HDAC3.

The protein resides in the secreted. The protein localises to the cytoplasm. It is found in the nucleus. In terms of biological role, interleukin-16 stimulates a migratory response in CD4+ lymphocytes, monocytes, and eosinophils. Primes CD4+ T-cells for IL-2 and IL-15 responsiveness. Also induces T-lymphocyte expression of interleukin 2 receptor. Ligand for CD4. Pro-interleukin-16 is involved in cell cycle progression in T-cells. Appears to be involved in transcriptional regulation of SKP2 and is probably part of a transcriptional repression complex on the core promoter of the SKP2 gene. May act as a scaffold for GABPB1 (the DNA-binding subunit the GABP transcription factor complex) and HDAC3 thus maintaining transcriptional repression and blocking cell cycle progression in resting T-cells. The sequence is that of Pro-interleukin-16 (IL16) from Macaca mulatta (Rhesus macaque).